Here is an 849-residue protein sequence, read N- to C-terminus: Putative endoplasmic reticulum mannosidase MNL2 (849 aa).

The Cytoplasmic segment spans residues 1-12 (MSIARLVYSLFR). Residues 13–32 (RVRSVLLLFITISLLFYYTF) form a helical; Signal-anchor for type II membrane protein membrane-spanning segment. The Lumenal segment spans residues 33 to 849 (QNEIDILNSY…TQGGHIIKKK (817 aa)). Asparagine 45 carries N-linked (GlcNAc...) asparagine glycosylation. The segment at 56 to 79 (HNTEGSSKLDPPDLSSTGSDRIAT) is disordered. Residues cysteine 559 and cysteine 598 are joined by a disulfide bond.

Belongs to the glycosyl hydrolase 47 family. Ca(2+) serves as cofactor.

The protein resides in the endoplasmic reticulum membrane. It participates in protein modification; protein glycosylation. Putative mannosidase involved in glycoprotein quality control since it is involved in the targeting of misfolded glycoproteins for ER-associated protein degradation (ERAD). The sequence is that of Putative endoplasmic reticulum mannosidase MNL2 (MNL2) from Saccharomyces cerevisiae (strain ATCC 204508 / S288c) (Baker's yeast).